We begin with the raw amino-acid sequence, 473 residues long: Digalactosyldiacylglycerol synthase 2, chloroplastic (473 aa).

Interaction with the membrane lipid bilayer stretches follow at residues 130 to 148 (LTWF…YVIG) and 227 to 245 (QPFT…SKGY).

The protein belongs to the glycosyltransferase group 1 family. Glycosyltransferase 4 subfamily. As to expression, expressed in leaves, flowers and roots, but not in stems and siliques.

The protein localises to the plastid. It is found in the chloroplast outer membrane. It catalyses the reaction a 1,2-diacyl-3-O-(beta-D-galactosyl)-sn-glycerol + UDP-alpha-D-galactose = a 1,2-diacyl-3-O-[alpha-D-galactosyl-(1-&gt;6)-beta-D-galactosyl]-sn-glycerol + UDP + H(+). Its activity is regulated as follows. Stimulated by anionic phospholipids. Involved in the synthesis of diacylglycerol galactolipids that are specifically found in thylakoid membranes. Specific for alpha-glycosidic linkages. During phosphate shortage, involved in the biosynthesis of digalactosyldiacylglycerol (DGDG) which rescues the limitation of phospholipids. This chain is Digalactosyldiacylglycerol synthase 2, chloroplastic, found in Arabidopsis thaliana (Mouse-ear cress).